Reading from the N-terminus, the 113-residue chain is EVKLEESGGGLVQPGGSMKLSCVASGFTFSNYWMNWVRQSPEKGLEWIAEIRLKSHNYATHYAESVKGRFTISRDDSKSSVFLQMNNLRAEDTGIHYCTTGFAYWGQGTLVTV.

An Ig-like domain is found at 1–113 (EVKLEESGGG…YWGQGTLVTV (113 aa)). C22 and C98 are joined by a disulfide.

The polypeptide is Ig heavy chain V-III region E109 (Mus musculus (Mouse)).